Consider the following 398-residue polypeptide: Probable RNA methyltransferase sce1580 (398 aa).

The disordered stretch occupies residues 1–24; the sequence is MRVPEIPEETASPLRAGDPPAQVA. Glu-140 functions as the Proton acceptor in the catalytic mechanism. A Radical SAM core domain is found at 146 to 378; that stretch reads GPARTTLCVS…TLVRRPRGRD (233 aa). An intrachain disulfide couples Cys-153 to Cys-383. [4Fe-4S] cluster contacts are provided by Cys-160, Cys-164, and Cys-167. Residues 211–212, Ser-243, 265–267, and Asn-340 contribute to the S-adenosyl-L-methionine site; these read GE and SLN. Cys-383 acts as the S-methylcysteine intermediate in catalysis.

This sequence belongs to the radical SAM superfamily. RlmN family. Requires [4Fe-4S] cluster as cofactor.

The protein localises to the cytoplasm. The sequence is that of Probable RNA methyltransferase sce1580 from Sorangium cellulosum (strain So ce56) (Polyangium cellulosum (strain So ce56)).